The following is a 177-amino-acid chain: LOB domain-containing protein 33 (177 aa).

In terms of domain architecture, LOB spans 6 to 108 (SSCGACKFLR…EEIEFLGSQM (103 aa)).

Belongs to the LOB domain-containing protein family. In terms of tissue distribution, expressed in roots.

The sequence is that of LOB domain-containing protein 33 (LBD33) from Arabidopsis thaliana (Mouse-ear cress).